The sequence spans 203 residues: Protein GrpE (203 aa).

Over residues 1–10 (MSNESIKAEQ) the composition is skewed to basic and acidic residues. The interval 1–20 (MSNESIKAEQDLIQEGVESE) is disordered.

Belongs to the GrpE family. As to quaternary structure, homodimer.

The protein resides in the cytoplasm. Functionally, participates actively in the response to hyperosmotic and heat shock by preventing the aggregation of stress-denatured proteins, in association with DnaK and GrpE. It is the nucleotide exchange factor for DnaK and may function as a thermosensor. Unfolded proteins bind initially to DnaJ; upon interaction with the DnaJ-bound protein, DnaK hydrolyzes its bound ATP, resulting in the formation of a stable complex. GrpE releases ADP from DnaK; ATP binding to DnaK triggers the release of the substrate protein, thus completing the reaction cycle. Several rounds of ATP-dependent interactions between DnaJ, DnaK and GrpE are required for fully efficient folding. The protein is Protein GrpE of Shewanella sp. (strain MR-7).